We begin with the raw amino-acid sequence, 359 residues long: UPF0284 protein MTH_1426 (359 aa).

Belongs to the UPF0284 family.

This is UPF0284 protein MTH_1426 from Methanothermobacter thermautotrophicus (strain ATCC 29096 / DSM 1053 / JCM 10044 / NBRC 100330 / Delta H) (Methanobacterium thermoautotrophicum).